Here is a 277-residue protein sequence, read N- to C-terminus: Diaminopimelate epimerase (277 aa).

Substrate-binding residues include Asn-13, Gln-46, and Asn-66. Cys-75 (proton donor) is an active-site residue. Residues 76-77 (GN), Asn-159, Asn-192, and 210-211 (ER) each bind substrate. The active-site Proton acceptor is the Cys-219. Residue 220-221 (GT) coordinates substrate.

It belongs to the diaminopimelate epimerase family. Homodimer.

It localises to the cytoplasm. It catalyses the reaction (2S,6S)-2,6-diaminopimelate = meso-2,6-diaminopimelate. It functions in the pathway amino-acid biosynthesis; L-lysine biosynthesis via DAP pathway; DL-2,6-diaminopimelate from LL-2,6-diaminopimelate: step 1/1. Its function is as follows. Catalyzes the stereoinversion of LL-2,6-diaminopimelate (L,L-DAP) to meso-diaminopimelate (meso-DAP), a precursor of L-lysine and an essential component of the bacterial peptidoglycan. In Aromatoleum aromaticum (strain DSM 19018 / LMG 30748 / EbN1) (Azoarcus sp. (strain EbN1)), this protein is Diaminopimelate epimerase.